We begin with the raw amino-acid sequence, 336 residues long: Anthranilate phosphoribosyltransferase (336 aa).

Residues Gly-82, 85–86 (GD), Thr-90, 92–95 (NIST), 110–118 (KHGNRFASG), and Ser-122 contribute to the 5-phospho-alpha-D-ribose 1-diphosphate site. Position 82 (Gly-82) interacts with anthranilate. A Mg(2+)-binding site is contributed by Ser-94. Asn-113 provides a ligand contact to anthranilate. Position 168 (Arg-168) interacts with anthranilate. Positions 227 and 228 each coordinate Mg(2+).

This sequence belongs to the anthranilate phosphoribosyltransferase family. Homodimer. Requires Mg(2+) as cofactor.

The enzyme catalyses N-(5-phospho-beta-D-ribosyl)anthranilate + diphosphate = 5-phospho-alpha-D-ribose 1-diphosphate + anthranilate. Its pathway is amino-acid biosynthesis; L-tryptophan biosynthesis; L-tryptophan from chorismate: step 2/5. In terms of biological role, catalyzes the transfer of the phosphoribosyl group of 5-phosphorylribose-1-pyrophosphate (PRPP) to anthranilate to yield N-(5'-phosphoribosyl)-anthranilate (PRA). The protein is Anthranilate phosphoribosyltransferase of Desulfitobacterium hafniense (strain DSM 10664 / DCB-2).